The chain runs to 206 residues: Small ribosomal subunit protein eS1 (206 aa).

This sequence belongs to the eukaryotic ribosomal protein eS1 family.

The chain is Small ribosomal subunit protein eS1 from Methanocorpusculum labreanum (strain ATCC 43576 / DSM 4855 / Z).